The sequence spans 895 residues: Probable inorganic carbon transporter subunit DabA 1 (895 aa).

C398, D400, H581, and C596 together coordinate Zn(2+).

Belongs to the inorganic carbon transporter (TC 9.A.2) DabA family. Forms a complex with DabB. Zn(2+) is required as a cofactor.

It localises to the cell inner membrane. In terms of biological role, part of an energy-coupled inorganic carbon pump. The polypeptide is Probable inorganic carbon transporter subunit DabA 1 (Rhodopirellula baltica (strain DSM 10527 / NCIMB 13988 / SH1)).